We begin with the raw amino-acid sequence, 224 residues long: 7-cyano-7-deazaguanine synthase (224 aa).

Position 10-20 (10-20 (LSGGLDSATVV)) interacts with ATP. Zn(2+) contacts are provided by C189, C199, C202, and C205.

It belongs to the QueC family. The cofactor is Zn(2+).

The catalysed reaction is 7-carboxy-7-deazaguanine + NH4(+) + ATP = 7-cyano-7-deazaguanine + ADP + phosphate + H2O + H(+). The protein operates within purine metabolism; 7-cyano-7-deazaguanine biosynthesis. In terms of biological role, catalyzes the ATP-dependent conversion of 7-carboxy-7-deazaguanine (CDG) to 7-cyano-7-deazaguanine (preQ(0)). The chain is 7-cyano-7-deazaguanine synthase from Pseudomonas putida (strain ATCC 700007 / DSM 6899 / JCM 31910 / BCRC 17059 / LMG 24140 / F1).